Reading from the N-terminus, the 90-residue chain is Probable Fe(2+)-trafficking protein (90 aa).

The protein belongs to the Fe(2+)-trafficking protein family.

In terms of biological role, could be a mediator in iron transactions between iron acquisition and iron-requiring processes, such as synthesis and/or repair of Fe-S clusters in biosynthetic enzymes. The polypeptide is Probable Fe(2+)-trafficking protein (Leptothrix cholodnii (strain ATCC 51168 / LMG 8142 / SP-6) (Leptothrix discophora (strain SP-6))).